Reading from the N-terminus, the 96-residue chain is Cytochrome c-553 (96 aa).

The signal sequence occupies residues 1-19 (MKKVIMALGVLAFANALMA). Positions 29, 32, 33, and 73 each coordinate heme c.

This sequence belongs to the cytochrome c family. Binds 1 heme c group covalently per subunit.

It localises to the periplasm. In terms of biological role, natural electron acceptor for a formate dehydrogenase. This Helicobacter pylori (strain ATCC 700392 / 26695) (Campylobacter pylori) protein is Cytochrome c-553.